Here is a 188-residue protein sequence, read N- to C-terminus: Acireductone dioxygenase (188 aa).

The segment at 1-20 is disordered; the sequence is MSRLRIFADSNPTTPHFDSR. Fe(2+) contacts are provided by His-97, His-99, Glu-103, and His-141. 4 residues coordinate Ni(2+): His-97, His-99, Glu-103, and His-141.

It belongs to the acireductone dioxygenase (ARD) family. In terms of assembly, monomer. Fe(2+) serves as cofactor. The cofactor is Ni(2+).

The catalysed reaction is 1,2-dihydroxy-5-(methylsulfanyl)pent-1-en-3-one + O2 = 3-(methylsulfanyl)propanoate + CO + formate + 2 H(+). The enzyme catalyses 1,2-dihydroxy-5-(methylsulfanyl)pent-1-en-3-one + O2 = 4-methylsulfanyl-2-oxobutanoate + formate + 2 H(+). Its pathway is amino-acid biosynthesis; L-methionine biosynthesis via salvage pathway; L-methionine from S-methyl-5-thio-alpha-D-ribose 1-phosphate: step 5/6. In terms of biological role, catalyzes 2 different reactions between oxygen and the acireductone 1,2-dihydroxy-3-keto-5-methylthiopentene (DHK-MTPene) depending upon the metal bound in the active site. Fe-containing acireductone dioxygenase (Fe-ARD) produces formate and 2-keto-4-methylthiobutyrate (KMTB), the alpha-ketoacid precursor of methionine in the methionine recycle pathway. Ni-containing acireductone dioxygenase (Ni-ARD) produces methylthiopropionate, carbon monoxide and formate, and does not lie on the methionine recycle pathway. This is Acireductone dioxygenase from Xanthomonas campestris pv. campestris (strain 8004).